The following is a 234-amino-acid chain: RNA-binding protein pno1 (234 aa).

Positions 1–39 (MPTQDSAAKQADDGFQLVQKKSRKRKMTMDMDDADPKAG) are disordered. In terms of domain architecture, KH spans 158–207 (LARCIGRLAGKGGRTKFTIENVTKTRIVLADSKVHILGSYQNIRAARTAL).

The protein belongs to the PNO1 family.

The protein localises to the nucleus. Its subcellular location is the nucleolus. In Ixodes scapularis (Black-legged tick), this protein is RNA-binding protein pno1.